The primary structure comprises 848 residues: Transforming growth factor beta receptor type 3 (848 aa).

The signal sequence occupies residues 1–20 (MTLHCVVALFALISSCLATA). Residues 21 to 784 (GPEPGVQCAL…IFHGLDTLTV (764 aa)) lie on the Extracellular side of the membrane. 2 N-linked (GlcNAc...) asparagine glycosylation sites follow: Asn34 and Asn141. An intrachain disulfide couples Cys52 to Cys197. The tract at residues 390 to 448 (SGEGAARHGGLPFPFPYIPRRGRQDGGKDRLPRPKDPVVPSIQLLPGPREPQEAQGSRD) is disordered. Residues 411–425 (GRQDGGKDRLPRPKD) show a composition bias toward basic and acidic residues. The ZP domain occupies 454-729 (RCDSEKMLVA…PKCVLPDEAC (276 aa)). The N-linked (GlcNAc...) asparagine glycan is linked to Asn491. O-linked (Xyl...) (glycosaminoglycan) serine glycans are attached at residues Ser529, Ser533, and Ser544. Residues Asn570, Asn589, and Asn696 are each glycosylated (N-linked (GlcNAc...) asparagine). Intrachain disulfides connect Cys638–Cys704, Cys659–Cys729, and Cys709–Cys722. An interaction with TGF-beta ligand region spans residues 736–750 (MIWAMMQNKKTFTKP). A helical transmembrane segment spans residues 785-806 (MGIAFAAFVIGALLTGALWYIY). Over 807–848 (SHTGDSAGRQPVPTSPPASENSSAAHSLGSTQSTPCSSSSAA) the chain is Cytoplasmic. Residues 813–848 (AGRQPVPTSPPASENSSAAHSLGSTQSTPCSSSSAA) form a disordered region. Low complexity predominate over residues 833 to 848 (SLGSTQSTPCSSSSAA). Thr837 is modified (phosphothreonine).

Forms homodimers and homooligomers. Interacts with DYNLT4. Interacts with integrin ITGA5:ITGB1; this interaction promotes the internalization and trafficking of ITGA5:ITGB1 into endocytic vesicles. Interacts with TGFB1, BMP2, BMP5, BMP7 or GDF5 and inhibin A via the ligand binding domains. Interacts with ALK3/BMPR1A; this interaction results in the cell surface retention of BMPR1A. Interacts with ALK6/BMPR1B; this interaction enhances BMPR1B-mediated stimulation of the BMP signaling pathway. Interacts with the scaffolding protein beta-arrestin2/ARRB2; this interaction mediates internalization of TGFBR3 and thus regulates migration, actin cytoskeleton and activation of CDC42. Extensively modified by glycosaminoglycan groups (GAG). Post-translationally, phosphorylated in the cytoplasmic domain by the type II receptor TGFBR2 at THR-837 to mediate recruitment of ARRB2 and subsequent internalization of TGFBR2 and TGFBR3.

The protein resides in the cell membrane. Its subcellular location is the secreted. It localises to the extracellular space. The protein localises to the extracellular matrix. In terms of biological role, cell surface receptor that regulates diverse cellular processes including cell proliferation, differentiation, migration, and apoptosis. Initiates BMP, inhibin, and TGF-beta signaling pathways by interacting with different ligands including TGFB1, BMP2, BMP5, BMP7 or GDF5. Alternatively, acts as a cell surface coreceptor for BMP ligands, serving to enhance ligand binding by differentially regulating BMPR1A/ALK3 and BMPR1B/ALK6 receptor trafficking. Promotes epithelial cell adhesion, focal adhesion formation and integrin signaling during epithelial cell spreading on fibronectin. By interacting with the scaffolding protein beta-arrestin2/ARRB2, regulates migration or actin cytoskeleton and promotes the activation of CDC42 as well as the inhibition of NF-kappa-B. In gonadotrope cells, acts as an inhibin A coreceptor and regulates follicle-stimulating hormone (FSH) levels and female fertility. Plays a role in the inhibition of directed and random cell migration in epithelial cells by altering the actin cytoskeletal organization. Participates in epithelial-mesenchymal transformation (EMT) upon binding to BMP2 or TGFB2, by activating the PAR6/SMURF1/RHOA pathway. The polypeptide is Transforming growth factor beta receptor type 3 (TGFBR3) (Sus scrofa (Pig)).